The chain runs to 281 residues: Pantothenate synthetase (281 aa).

Methionine 30 to histidine 37 lines the ATP pocket. Histidine 37 (proton donor) is an active-site residue. Position 61 (glutamine 61) interacts with (R)-pantoate. Residue glutamine 61 coordinates beta-alanine. Glycine 147–aspartate 150 contributes to the ATP binding site. Glutamine 153 is a binding site for (R)-pantoate. ATP contacts are provided by residues isoleucine 176 and leucine 184–arginine 187.

The protein belongs to the pantothenate synthetase family. As to quaternary structure, homodimer.

Its subcellular location is the cytoplasm. It carries out the reaction (R)-pantoate + beta-alanine + ATP = (R)-pantothenate + AMP + diphosphate + H(+). It functions in the pathway cofactor biosynthesis; (R)-pantothenate biosynthesis; (R)-pantothenate from (R)-pantoate and beta-alanine: step 1/1. Its function is as follows. Catalyzes the condensation of pantoate with beta-alanine in an ATP-dependent reaction via a pantoyl-adenylate intermediate. In Porphyromonas gingivalis (strain ATCC BAA-308 / W83), this protein is Pantothenate synthetase.